A 90-amino-acid chain; its full sequence is Phosphoribosyl-ATP pyrophosphatase (90 aa).

It belongs to the PRA-PH family.

Its subcellular location is the cytoplasm. It carries out the reaction 1-(5-phospho-beta-D-ribosyl)-ATP + H2O = 1-(5-phospho-beta-D-ribosyl)-5'-AMP + diphosphate + H(+). Its pathway is amino-acid biosynthesis; L-histidine biosynthesis; L-histidine from 5-phospho-alpha-D-ribose 1-diphosphate: step 2/9. This is Phosphoribosyl-ATP pyrophosphatase from Streptomyces avermitilis (strain ATCC 31267 / DSM 46492 / JCM 5070 / NBRC 14893 / NCIMB 12804 / NRRL 8165 / MA-4680).